Consider the following 320-residue polypeptide: ATP-dependent 6-phosphofructokinase (320 aa).

Residue Gly12 participates in ATP binding. Residue 22-26 coordinates ADP; it reads RGVVR. Residues 73–74 and 103–106 contribute to the ATP site; these read RF and GDGS. Residue Asp104 participates in Mg(2+) binding. Position 126 to 128 (126 to 128) interacts with substrate; the sequence is TID. The active-site Proton acceptor is the Asp128. Arg155 lines the ADP pocket. Residues Arg163 and 170–172 contribute to the substrate site; that span reads MGR. ADP-binding positions include 186-188, Lys212, and 214-216; these read GCE and KKH. Substrate-binding positions include Glu223, Arg244, and 250–253; that span reads HIQR.

This sequence belongs to the phosphofructokinase type A (PFKA) family. ATP-dependent PFK group I subfamily. Prokaryotic clade 'B1' sub-subfamily. Homotetramer. Mg(2+) serves as cofactor.

The protein localises to the cytoplasm. It carries out the reaction beta-D-fructose 6-phosphate + ATP = beta-D-fructose 1,6-bisphosphate + ADP + H(+). The protein operates within carbohydrate degradation; glycolysis; D-glyceraldehyde 3-phosphate and glycerone phosphate from D-glucose: step 3/4. Allosterically activated by ADP and other diphosphonucleosides, and allosterically inhibited by phosphoenolpyruvate. In terms of biological role, catalyzes the phosphorylation of D-fructose 6-phosphate to fructose 1,6-bisphosphate by ATP, the first committing step of glycolysis. The polypeptide is ATP-dependent 6-phosphofructokinase (Aliivibrio salmonicida (strain LFI1238) (Vibrio salmonicida (strain LFI1238))).